The primary structure comprises 329 residues: Dolichyl-diphosphooligosaccharide--protein glycosyltransferase subunit MAGT1 (329 aa).

An N-terminal signal peptide occupies residues 1-23 (MAGLKGLLFGGILFAMCGGLSEG). Over 24–178 (QKKKEMVLSD…DVNIRVIRPP (155 aa)) the chain is Extracellular. Residues 41–169 (WASKRPVIRM…LARWVADRTD (129 aa)) enclose the Thioredoxin domain. Asn65 carries an N-linked (GlcNAc...) asparagine glycan. Cys81 and Cys84 are joined by a disulfide. The helical transmembrane segment at 179-199 (NYAGPLMLGLLLAVIGGLVYL) threads the bilayer. The Cytoplasmic segment spans residues 200-212 (RRSNLDFLNNKTG). The chain crosses the membrane as a helical span at residues 213–233 (WALAALCFVLAMTSGQMWNHI). The Extracellular segment spans residues 234–258 (RGPPYAHKNPHTNQVNYIHGSSQAQ). The helical transmembrane segment at 259-279 (FVAETHIVLLFNGAVTLGMVL) threads the bilayer. Topologically, residues 280-294 (LHEAATSDLDVGKRK) are cytoplasmic. A helical transmembrane segment spans residues 295–315 (IMCIAGITLVVIFFSWLLSVF). The Extracellular segment spans residues 316-329 (RSKYHGYPYSFLMT).

The protein belongs to the OST3/OST6 family. Accessory component of the STT3B-containing form of the oligosaccharyltransferase (OST) complex.

The protein resides in the cell membrane. It is found in the endoplasmic reticulum. Its subcellular location is the endoplasmic reticulum membrane. It functions in the pathway protein modification; protein glycosylation. Accessory component of the STT3B-containing form of the N-oligosaccharyl transferase (OST) complex which catalyzes the transfer of a high mannose oligosaccharide from a lipid-linked oligosaccharide donor to an asparagine residue within an Asn-X-Ser/Thr consensus motif in nascent polypeptide chains. May be involved in substrate-specific N-glycosylation involving acceptor sites that are near cysteine residues. Could indirectly play a role in Mg(2+) transport in epithelial cells. The polypeptide is Dolichyl-diphosphooligosaccharide--protein glycosyltransferase subunit MAGT1 (Xenopus laevis (African clawed frog)).